A 751-amino-acid polypeptide reads, in one-letter code: NAD(P)H-quinone oxidoreductase subunit 5, chloroplastic (751 aa).

16 helical membrane-spanning segments follow: residues 9 to 29, 40 to 60, 89 to 109, 125 to 145, 147 to 167, 185 to 205, 219 to 239, 258 to 278, 280 to 300, 327 to 347, 354 to 374, 396 to 416, 425 to 445, 543 to 563, 599 to 619, and 719 to 739; these read WIIP…LIIF, WAFP…KLSI, VDPL…LVLI, FAYL…SNFI, IYIF…FWFT, GDFG…SFEF, NEVH…GAVA, TPIS…FLVA, LFPL…VGII, LGYM…FHLI, ALLF…VGYS, TAFL…CFWS, WLYS…TAFY, LFPL…GIPF, FLTN…LASF, and ISSY…IYYF.

Belongs to the complex I subunit 5 family. NDH is composed of at least 16 different subunits, 5 of which are encoded in the nucleus.

Its subcellular location is the plastid. It localises to the chloroplast thylakoid membrane. The catalysed reaction is a plastoquinone + NADH + (n+1) H(+)(in) = a plastoquinol + NAD(+) + n H(+)(out). The enzyme catalyses a plastoquinone + NADPH + (n+1) H(+)(in) = a plastoquinol + NADP(+) + n H(+)(out). In terms of biological role, NDH shuttles electrons from NAD(P)H:plastoquinone, via FMN and iron-sulfur (Fe-S) centers, to quinones in the photosynthetic chain and possibly in a chloroplast respiratory chain. The immediate electron acceptor for the enzyme in this species is believed to be plastoquinone. Couples the redox reaction to proton translocation, and thus conserves the redox energy in a proton gradient. This Fagopyrum esculentum subsp. ancestrale (Wild buckwheat) protein is NAD(P)H-quinone oxidoreductase subunit 5, chloroplastic (ndhF).